Reading from the N-terminus, the 668-residue chain is tRNA 5-methylaminomethyl-2-thiouridine biosynthesis bifunctional protein MnmC (668 aa).

The tract at residues 1–245 (MKHYAIQPAN…KREMLCGVME (245 aa)) is tRNA (mnm(5)s(2)U34)-methyltransferase. The FAD-dependent cmnm(5)s(2)U34 oxidoreductase stretch occupies residues 270 to 668 (IGGGIASALL…LLKGKAVKAG (399 aa)).

In the N-terminal section; belongs to the methyltransferase superfamily. tRNA (mnm(5)s(2)U34)-methyltransferase family. The protein in the C-terminal section; belongs to the DAO family. Requires FAD as cofactor.

It localises to the cytoplasm. It carries out the reaction 5-aminomethyl-2-thiouridine(34) in tRNA + S-adenosyl-L-methionine = 5-methylaminomethyl-2-thiouridine(34) in tRNA + S-adenosyl-L-homocysteine + H(+). Catalyzes the last two steps in the biosynthesis of 5-methylaminomethyl-2-thiouridine (mnm(5)s(2)U) at the wobble position (U34) in tRNA. Catalyzes the FAD-dependent demodification of cmnm(5)s(2)U34 to nm(5)s(2)U34, followed by the transfer of a methyl group from S-adenosyl-L-methionine to nm(5)s(2)U34, to form mnm(5)s(2)U34. The chain is tRNA 5-methylaminomethyl-2-thiouridine biosynthesis bifunctional protein MnmC from Escherichia coli O139:H28 (strain E24377A / ETEC).